Reading from the N-terminus, the 141-residue chain is NADH dehydrogenase [ubiquinone] 1 alpha subcomplex subunit 11 (141 aa).

Helical transmembrane passes span 21 to 43 and 58 to 80; these read KTYITTALGGICGIIGSAYRVSL and RYTFTAAAIGAMFGLTTCVSAQV.

Belongs to the complex I NDUFA11 subunit family. In terms of assembly, complex I is composed of 45 different subunits.

The protein resides in the mitochondrion inner membrane. Its function is as follows. Accessory subunit of the mitochondrial membrane respiratory chain NADH dehydrogenase (Complex I), that is believed not to be involved in catalysis. Complex I functions in the transfer of electrons from NADH to the respiratory chain. The immediate electron acceptor for the enzyme is believed to be ubiquinone. This chain is NADH dehydrogenase [ubiquinone] 1 alpha subcomplex subunit 11 (Ndufa11), found in Mus musculus (Mouse).